We begin with the raw amino-acid sequence, 139 residues long: Putative pre-16S rRNA nuclease (139 aa).

Belongs to the YqgF nuclease family.

The protein resides in the cytoplasm. Its function is as follows. Could be a nuclease involved in processing of the 5'-end of pre-16S rRNA. The protein is Putative pre-16S rRNA nuclease of Proteus mirabilis (strain HI4320).